We begin with the raw amino-acid sequence, 275 residues long: 2,3,4,5-tetrahydropyridine-2,6-dicarboxylate N-succinyltransferase (275 aa).

R106 and D143 together coordinate substrate.

Belongs to the transferase hexapeptide repeat family. As to quaternary structure, homotrimer.

The protein localises to the cytoplasm. The enzyme catalyses (S)-2,3,4,5-tetrahydrodipicolinate + succinyl-CoA + H2O = (S)-2-succinylamino-6-oxoheptanedioate + CoA. The protein operates within amino-acid biosynthesis; L-lysine biosynthesis via DAP pathway; LL-2,6-diaminopimelate from (S)-tetrahydrodipicolinate (succinylase route): step 1/3. This chain is 2,3,4,5-tetrahydropyridine-2,6-dicarboxylate N-succinyltransferase, found in Cupriavidus pinatubonensis (strain JMP 134 / LMG 1197) (Cupriavidus necator (strain JMP 134)).